The primary structure comprises 491 residues: UDP-N-acetylmuramate--L-alanine ligase (491 aa).

Residue 126-132 (GTHGKTT) participates in ATP binding.

Belongs to the MurCDEF family.

The protein localises to the cytoplasm. It catalyses the reaction UDP-N-acetyl-alpha-D-muramate + L-alanine + ATP = UDP-N-acetyl-alpha-D-muramoyl-L-alanine + ADP + phosphate + H(+). The protein operates within cell wall biogenesis; peptidoglycan biosynthesis. In terms of biological role, cell wall formation. The chain is UDP-N-acetylmuramate--L-alanine ligase from Escherichia coli (strain K12 / MC4100 / BW2952).